The sequence spans 819 residues: Phenylalanine--tRNA ligase beta subunit (819 aa).

Positions 42 to 154 (RGGLRGLVIG…SDAPVGMPAA (113 aa)) constitute a tRNA-binding domain. A B5 domain is found at 412–488 (LKPHLISLSF…RIYGYNQVEL (77 aa)). 4 residues coordinate Mg(2+): Asp466, Asp472, Glu475, and Glu476. Residues 726–819 (PRFPEVKRDL…LEQKLGAQLR (94 aa)) enclose the FDX-ACB domain.

This sequence belongs to the phenylalanyl-tRNA synthetase beta subunit family. Type 1 subfamily. Tetramer of two alpha and two beta subunits. Requires Mg(2+) as cofactor.

Its subcellular location is the cytoplasm. It carries out the reaction tRNA(Phe) + L-phenylalanine + ATP = L-phenylalanyl-tRNA(Phe) + AMP + diphosphate + H(+). The chain is Phenylalanine--tRNA ligase beta subunit from Porphyromonas gingivalis (strain ATCC BAA-308 / W83).